Here is a 111-residue protein sequence, read N- to C-terminus: Ig kappa chain V-III region PC 7175 (111 aa).

A framework-1 region spans residues 1–23 (DIVLTQSPASLAVSLGQRATISC). A disulfide bridge connects residues Cys23 and Cys92. Residues 24 to 38 (RASKSVSTSGYSYMH) form a complementarity-determining-1 region. A framework-2 region spans residues 39-53 (WYQQKPGQPPKLLIY). The interval 54–60 (LASNLES) is complementarity-determining-2. The segment at 61-92 (GVPARFSGSGSGTDFTLNIHPVEEEDAATYYC) is framework-3. The tract at residues 93-101 (QHSRELPLT) is complementarity-determining-3. Positions 102 to 111 (FGAGTKLELK) are framework-4.

This Mus musculus (Mouse) protein is Ig kappa chain V-III region PC 7175.